A 287-amino-acid chain; its full sequence is tRNA selenocysteine 1-associated protein 1 (287 aa).

2 RRM domains span residues 3–86 (ASLW…YATY) and 96–175 (YSLF…VAIP).

The protein belongs to the RRM TRSPAP family. Component of the tRNA(Sec) complex composed at least of EEFSEC, SECISBP2, SEPHS1, SEPSECS, TRNAU1AP and tRNA(Sec). Found in a complex with tRNA(Sec). Interacts with SEPSECS. Associates with mRNP and/or polysomes. Found in a complex with EEFSEC, SECISBP2, TRNAU1AP and tRNA(Sec).

The protein resides in the nucleus. It localises to the cytoplasm. Its function is as follows. Involved in the early steps of selenocysteine biosynthesis and tRNA(Sec) charging to the later steps resulting in the cotranslational incorporation of selenocysteine into selenoproteins. Stabilizes the SECISBP2, EEFSEC and tRNA(Sec) complex. May be involved in the methylation of tRNA(Sec). Enhances efficiency of selenoproteins synthesis. The polypeptide is tRNA selenocysteine 1-associated protein 1 (TRNAU1AP) (Bos taurus (Bovine)).